A 293-amino-acid chain; its full sequence is DegV domain-containing protein MG326 homolog (293 aa).

Positions 3–289 constitute a DegV domain; the sequence is TAIITDSTAS…IDAFSISLLL (287 aa). Residues Thr-62 and Ser-94 each contribute to the hexadecanoate site.

In terms of biological role, may bind long-chain fatty acids, such as palmitate, and may play a role in lipid transport or fatty acid metabolism. This is DegV domain-containing protein MG326 homolog from Mycoplasma pneumoniae (strain ATCC 29342 / M129 / Subtype 1) (Mycoplasmoides pneumoniae).